The following is a 366-amino-acid chain: Carbamoyl phosphate synthase small chain (366 aa).

Positions 1–174 (MQEIPAILVL…GERYTVDNPD (174 aa)) are CPSase. Residues Ser48, Gly226, and Gly228 each coordinate L-glutamine. The 189-residue stretch at 178-366 (HVVAFDYGIK…FTELMERLKN (189 aa)) folds into the Glutamine amidotransferase type-1 domain. The Nucleophile role is filled by Cys256. 5 residues coordinate L-glutamine: Leu257, Gln260, Asn298, Gly300, and Phe301. Residues His340 and Glu342 contribute to the active site.

The protein belongs to the CarA family. In terms of assembly, composed of two chains; the small (or glutamine) chain promotes the hydrolysis of glutamine to ammonia, which is used by the large (or ammonia) chain to synthesize carbamoyl phosphate. Tetramer of heterodimers (alpha,beta)4.

The enzyme catalyses hydrogencarbonate + L-glutamine + 2 ATP + H2O = carbamoyl phosphate + L-glutamate + 2 ADP + phosphate + 2 H(+). It catalyses the reaction L-glutamine + H2O = L-glutamate + NH4(+). The protein operates within amino-acid biosynthesis; L-arginine biosynthesis; carbamoyl phosphate from bicarbonate: step 1/1. It functions in the pathway pyrimidine metabolism; UMP biosynthesis via de novo pathway; (S)-dihydroorotate from bicarbonate: step 1/3. Functionally, small subunit of the glutamine-dependent carbamoyl phosphate synthetase (CPSase). CPSase catalyzes the formation of carbamoyl phosphate from the ammonia moiety of glutamine, carbonate, and phosphate donated by ATP, constituting the first step of 2 biosynthetic pathways, one leading to arginine and/or urea and the other to pyrimidine nucleotides. The small subunit (glutamine amidotransferase) binds and cleaves glutamine to supply the large subunit with the substrate ammonia. This is Carbamoyl phosphate synthase small chain from Chlorobaculum tepidum (strain ATCC 49652 / DSM 12025 / NBRC 103806 / TLS) (Chlorobium tepidum).